The following is a 166-amino-acid chain: Putative tRNA (cytidine(34)-2'-O)-methyltransferase (166 aa).

S-adenosyl-L-methionine is bound by residues Leu-83, Gly-109, Ile-130, and Ser-138.

The protein belongs to the class IV-like SAM-binding methyltransferase superfamily. RNA methyltransferase TrmH family. TrmL subfamily.

It is found in the cytoplasm. The catalysed reaction is cytidine(34) in tRNA + S-adenosyl-L-methionine = 2'-O-methylcytidine(34) in tRNA + S-adenosyl-L-homocysteine + H(+). The enzyme catalyses 5-carboxymethylaminomethyluridine(34) in tRNA(Leu) + S-adenosyl-L-methionine = 5-carboxymethylaminomethyl-2'-O-methyluridine(34) in tRNA(Leu) + S-adenosyl-L-homocysteine + H(+). Functionally, could methylate the ribose at the nucleotide 34 wobble position in tRNA. This is Putative tRNA (cytidine(34)-2'-O)-methyltransferase from Mycoplasma genitalium (strain ATCC 33530 / DSM 19775 / NCTC 10195 / G37) (Mycoplasmoides genitalium).